The sequence spans 112 residues: Diuretic hormone class 2 (112 aa).

An N-terminal signal peptide occupies residues 1–24 (MVRATCLLASCVLFALLLIVPASA). A propeptide spanning residues 25-71 (YPRYPSNYFREEGQYEPEEIMDMLNRLGNLIQMERKMENYKEDITSE) is cleaved from the precursor. Pro104 bears the Proline amide mark. Positions 108 to 112 (RRDAH) are excised as a propeptide.

As to expression, expressed in corpora cardiaca (CC), corpora allata (CA), antennal lobe (AL) and gnathal ganglion (GNG) (at protein level). Expression in CC, CA and AL detected in most animals, expression in GNG in few animals (at protein level).

It localises to the secreted. Regulation of fluid secretion. Stimulates Malpighian tubule fluid secretion. The polypeptide is Diuretic hormone class 2 (Agrotis ipsilon (Black cutworm moth)).